The sequence spans 217 residues: Uracil-DNA glycosylase (217 aa).

D62 acts as the Proton acceptor in catalysis.

It belongs to the uracil-DNA glycosylase (UDG) superfamily. UNG family.

It is found in the cytoplasm. It carries out the reaction Hydrolyzes single-stranded DNA or mismatched double-stranded DNA and polynucleotides, releasing free uracil.. Its function is as follows. Excises uracil residues from the DNA which can arise as a result of misincorporation of dUMP residues by DNA polymerase or due to deamination of cytosine. In Streptococcus mutans serotype c (strain ATCC 700610 / UA159), this protein is Uracil-DNA glycosylase.